Reading from the N-terminus, the 548-residue chain is 5-aminolevulinate synthase, mitochondrial (548 aa).

Residues 1–22 (MQRSIFARFGNSSAAVSTLNRL) constitute a mitochondrion transit peptide. Residues R91, S204, and K223 each contribute to the substrate site. Pyridoxal 5'-phosphate-binding residues include S256, H284, and T334. K337 is a catalytic residue. At K337 the chain carries N6-(pyridoxal phosphate)lysine. Pyridoxal 5'-phosphate contacts are provided by T366 and T367. T452 contacts substrate.

Belongs to the class-II pyridoxal-phosphate-dependent aminotransferase family. Homodimer. Interacts with MCX1. It depends on pyridoxal 5'-phosphate as a cofactor.

Its subcellular location is the mitochondrion matrix. It catalyses the reaction succinyl-CoA + glycine + H(+) = 5-aminolevulinate + CO2 + CoA. Its pathway is porphyrin-containing compound metabolism; protoporphyrin-IX biosynthesis; 5-aminolevulinate from glycine: step 1/1. Its activity is regulated as follows. Ihnhibited by hemin. In terms of biological role, catalyzes the synthesis of 5-aminolevulinate (ALA) from succinyl-CoA and glycine, the first and rate-limiting step in heme biosynthesis. In Saccharomyces cerevisiae (strain ATCC 204508 / S288c) (Baker's yeast), this protein is 5-aminolevulinate synthase, mitochondrial.